Here is a 145-residue protein sequence, read N- to C-terminus: MRAVVQRVKRGKVTVDGQVVSEIGPGLVALVGIRQGDGERECRYLAEKLVNLRIFEDGKGKFNYSVKDVGGEILVVSNFTVYGDTRKGRRPSFTEAAPPEVAREVFERFLDILKEQEVSVKSGIFQATMEVEIINDGPVTVIVEI.

Positions 137 to 138 match the Gly-cisPro motif, important for rejection of L-amino acids motif; that stretch reads GP.

It belongs to the DTD family. In terms of assembly, homodimer.

The protein resides in the cytoplasm. The catalysed reaction is glycyl-tRNA(Ala) + H2O = tRNA(Ala) + glycine + H(+). It carries out the reaction a D-aminoacyl-tRNA + H2O = a tRNA + a D-alpha-amino acid + H(+). In terms of biological role, an aminoacyl-tRNA editing enzyme that deacylates mischarged D-aminoacyl-tRNAs. Also deacylates mischarged glycyl-tRNA(Ala), protecting cells against glycine mischarging by AlaRS. Acts via tRNA-based rather than protein-based catalysis; rejects L-amino acids rather than detecting D-amino acids in the active site. By recycling D-aminoacyl-tRNA to D-amino acids and free tRNA molecules, this enzyme counteracts the toxicity associated with the formation of D-aminoacyl-tRNA entities in vivo and helps enforce protein L-homochirality. In Carboxydothermus hydrogenoformans (strain ATCC BAA-161 / DSM 6008 / Z-2901), this protein is D-aminoacyl-tRNA deacylase.